A 553-amino-acid polypeptide reads, in one-letter code: MNNVPWLSVLWLVPLAGAVLIILLPPGRRRLAKWAGMVVSVLTLAVSIVVAAEFKPSAEPYQFVEKHSWIPAFGAGYTLGVDGIAVVLVLLTTVLIPLLLVAGWNDATDADDLSPASGRYPQRPAPPRLRSSGGERTRGVHAYVALTLAIESMVLMSVIALDVLLFYVFFEAMLIPMYFLIGGFGQGAGRSRAAVKFLLYNLFGGLIMLAAVIGLYVVTAQYDSGTFDFREIVAGVAAGRYGADPAVFKALFLGFMFAFAIKAPLWPFHRWLPDAAVESTPATAVLMMAVMDKVGTFGMLRYCLQLFPDPSTYFRPLIVTLAIIGVIYGAIVAIGQTDMMRLIAYTSISHFGFIIAGIFVMTTQGQSGSTLYMLNHGLSTAAVFLIAGFLIARRGSRSIADYGGVQKVAPILAGTFMVSAMATVSLPGLAPFISEFLVLLGTFSRYWLAAAFGVTALVLSAVYMLWLYQRVMTGPVAEGNERIGDLVGREMIVVAPLIALLLVLGVYPKPVLDIINPAVENTMTTIGQHDPAPSVAHPVPAVGASRTAEGPHP.

The next 3 membrane-spanning stretches (helical) occupy residues 4 to 24, 34 to 54, and 84 to 104; these read VPWL…IILL, WAGM…AAEF, and IAVV…VAGW. The interval 113–135 is disordered; the sequence is LSPASGRYPQRPAPPRLRSSGGE. 10 helical membrane passes run 140–160, 164–184, 197–217, 246–266, 316–336, 342–362, 371–391, 420–440, 447–467, and 492–512; these read VHAY…SVIA, LLFY…IGGF, FLLY…GLYV, AVFK…APLW, PLIV…AIGQ, LIAY…FVMT, LYML…GFLI, AMAT…LVLL, WLAA…MLWL, and IVVA…KPVL. Residues 527–553 are disordered; sequence GQHDPAPSVAHPVPAVGASRTAEGPHP. The segment covering 531–544 has biased composition (low complexity); it reads PAPSVAHPVPAVGA.

This sequence belongs to the complex I subunit 4 family.

The protein resides in the cell membrane. The enzyme catalyses a quinone + NADH + 5 H(+)(in) = a quinol + NAD(+) + 4 H(+)(out). In terms of biological role, NDH-1 shuttles electrons from NADH, via FMN and iron-sulfur (Fe-S) centers, to quinones in the respiratory chain. The immediate electron acceptor for the enzyme in this species is believed to be menaquinone. Couples the redox reaction to proton translocation (for every two electrons transferred, four hydrogen ions are translocated across the cytoplasmic membrane), and thus conserves the redox energy in a proton gradient. This is NADH-quinone oxidoreductase subunit M (nuoM) from Mycobacterium tuberculosis (strain CDC 1551 / Oshkosh).